The following is a 279-amino-acid chain: Phosphate import ATP-binding protein PstB (279 aa).

The ABC transporter domain maps to 33-274 (LDINKLNLFY…PLKKKTEDYI (242 aa)). 65 to 72 (GPSGCGKS) is a binding site for ATP.

The protein belongs to the ABC transporter superfamily. Phosphate importer (TC 3.A.1.7) family. The complex is composed of two ATP-binding proteins (PstB), two transmembrane proteins (PstC and PstA) and a solute-binding protein (PstS).

Its subcellular location is the cell inner membrane. It catalyses the reaction phosphate(out) + ATP + H2O = ADP + 2 phosphate(in) + H(+). Its function is as follows. Part of the ABC transporter complex PstSACB involved in phosphate import. Responsible for energy coupling to the transport system. The sequence is that of Phosphate import ATP-binding protein PstB from Colwellia psychrerythraea (strain 34H / ATCC BAA-681) (Vibrio psychroerythus).